We begin with the raw amino-acid sequence, 717 residues long: Cell division cycle protein 27 homolog A (717 aa).

A compositionally biased stretch (polar residues) spans 198–208 (TEHIPGENQQD). Disordered regions lie at residues 198–217 (TEHIPGENQQDLKIMQQPGD), 282–315 (LSAEAQEESGRRRSARIAARKKNPMSQSFGKDSH), and 342–374 (SKEATTSGQSVSDIGSSVDDEEKSNPSESSPDR). Positions 293–304 (RRSARIAARKKN) are enriched in basic residues. Residues 342–356 (SKEATTSGQSVSDIG) are compositionally biased toward polar residues. TPR repeat units follow at residues 421–454 (HWVLMQVGKAYFELQDYFNADSSFTLAHQKYPYA), 489–522 (PESWCAVGNCYSLRKDHDTALKMFQRAIQLNERF), 524–556 (YAHTLCGHEFAALEEFEDAERCYRKALGIDTRH), 557–590 (YNAWYGLGMTYLRQEKFEFAQHQFQLALQINPRS), 592–624 (VIMCYYGIALHESKRNDEALMMMEKAVLTDAKN), 625–658 (PLPKYYKAHILTSLGDYHKAQKVLEELKECAPQE), and 659–692 (SSVHASLGKIYNQLKQYDKAVLHFGIALDLSPSP).

The protein belongs to the APC3/CDC27 family. As to quaternary structure, the APC/C is composed of at least 10 subunits. Interacts with APC2 and APC10.

The protein localises to the nucleus. It participates in protein modification; protein ubiquitination. In terms of biological role, component of the anaphase promoting complex/cyclosome (APC/C), a cell cycle-regulated E3 ubiquitin-protein ligase complex that controls progression through mitosis and the G1 phase of the cell cycle. The APC/C complex controls several key steps in the cell cycle by mediating ubiquitination and subsequent degradation of target proteins such as cyclins. The APC/C complex is required for the female gametophyte development and is involved in several aspect of development by controlling cell division and cell elongation. Involved in the control of endoreduplication. Functionally redundant with CDC27B in the control of gametophyte development. The polypeptide is Cell division cycle protein 27 homolog A (CDC27A) (Arabidopsis thaliana (Mouse-ear cress)).